The chain runs to 662 residues: UvrABC system protein B (662 aa).

Positions aspartate 31–arginine 188 constitute a Helicase ATP-binding domain. An ATP-binding site is contributed by glycine 44–threonine 51. The short motif at tyrosine 97 to valine 120 is the Beta-hairpin element. The Helicase C-terminal domain maps to glutamine 435–isoleucine 601. A UVR domain is found at lysine 626 to leucine 661.

Belongs to the UvrB family. Forms a heterotetramer with UvrA during the search for lesions. Interacts with UvrC in an incision complex.

The protein localises to the cytoplasm. Functionally, the UvrABC repair system catalyzes the recognition and processing of DNA lesions. A damage recognition complex composed of 2 UvrA and 2 UvrB subunits scans DNA for abnormalities. Upon binding of the UvrA(2)B(2) complex to a putative damaged site, the DNA wraps around one UvrB monomer. DNA wrap is dependent on ATP binding by UvrB and probably causes local melting of the DNA helix, facilitating insertion of UvrB beta-hairpin between the DNA strands. Then UvrB probes one DNA strand for the presence of a lesion. If a lesion is found the UvrA subunits dissociate and the UvrB-DNA preincision complex is formed. This complex is subsequently bound by UvrC and the second UvrB is released. If no lesion is found, the DNA wraps around the other UvrB subunit that will check the other stand for damage. The sequence is that of UvrABC system protein B from Streptococcus pneumoniae (strain P1031).